Here is a 361-residue protein sequence, read N- to C-terminus: Putative agmatine deiminase (361 aa).

Residue Cys-354 is the Amidino-cysteine intermediate of the active site.

It belongs to the agmatine deiminase family.

The enzyme catalyses agmatine + H2O = N-carbamoylputrescine + NH4(+). This chain is Putative agmatine deiminase, found in Streptococcus pneumoniae (strain Hungary19A-6).